The primary structure comprises 484 residues: ATP-dependent rRNA helicase RRP3 (484 aa).

The segment covering 1 to 10 (MAIVGSNSVS) has biased composition (polar residues). A disordered region spans residues 1–61 (MAIVGSNSVS…SSQKSKNIVE (61 aa)). Over residues 18-54 (RNDARDLAEKIKRNALKKQEQDKKQQLEEESKPESSQ) the composition is skewed to basic and acidic residues. A Q motif motif is present at residues 71-99 (STFSELKLVPELLEAIQQMKFSKPTPIQS). The region spanning 102 to 273 (IPHALEGKDI…RASLHNPVRV (172 aa)) is the Helicase ATP-binding domain. 115–122 (AQTGSGKT) contacts ATP. A DEAD box motif is present at residues 221-224 (DEAD). A Helicase C-terminal domain is found at 300–444 (YLIHLLNEFV…KDPSPPKAML (145 aa)). Residues 460–484 (RQTKEFHEKTRRGRRGKDDKDREEH) are disordered. Basic and acidic residues predominate over residues 475–484 (GKDDKDREEH).

It belongs to the DEAD box helicase family. DDX47/RRP3 subfamily. Interacts with the SSU processome.

Its subcellular location is the nucleus. It carries out the reaction ATP + H2O = ADP + phosphate + H(+). ATP-dependent rRNA helicase required for pre-ribosomal RNA processing. Involved in the maturation of the 35S-pre-rRNA and to its cleavage to mature 18S rRNA. This chain is ATP-dependent rRNA helicase RRP3, found in Scheffersomyces stipitis (strain ATCC 58785 / CBS 6054 / NBRC 10063 / NRRL Y-11545) (Yeast).